The chain runs to 302 residues: Merozoite surface protein 2 (302 aa).

The first 20 residues, 1 to 20 (MKVIKTLSIINFFIFVTFNI), serve as a signal peptide directing secretion. Residues asparagine 22 and asparagine 36 are each glycosylated (N-linked (GlcNAc...) asparagine). The segment at 44 to 228 (EESKPPTGAV…EQTESPELQS (185 aa)) is polymorphic region. A 1; partial repeat occupies 55–60 (GSGAGA). Residues 55–113 (GSGAGAGSGAGAVAGSGAGAVAGSGAGAVAGSGAGAVAGSGAGAVAGSGAGAVAGSGAG) are 8 X 8 AA tandem repeats of G-S-G-A-G-A-V-A. Repeat copies occupy residues 61-68 (GSGAGAVA), 69-76 (GSGAGAVA), 77-84 (GSGAGAVA), 85-92 (GSGAGAVA), 93-100 (GSGAGAVA), and 101-108 (GSGAGAVA). One copy of the 8; partial repeat lies at 109 to 113 (GSGAG). The interval 114 to 263 (NGANPGADAE…DSQKECTDGN (150 aa)) is disordered. Over residues 125–150 (SPSTPATTTTTTTTNDAEASTSTSSE) the composition is skewed to low complexity. The span at 151-167 (NRNHNNAETNPKGKGEV) shows a compositional bias: basic and acidic residues. Polar residues-rich tracts occupy residues 169–195 (KPNQ…NVPR) and 202–230 (KSPT…QSAP). N-linked (GlcNAc...) asparagine glycosylation is present at asparagine 179. Asparagine 251 carries N-linked (GlcNAc...) asparagine glycosylation. Cysteine 259 and cysteine 267 are disulfide-bonded. Asparagine 275 and asparagine 276 each carry an N-linked (GlcNAc...) asparagine glycan. Asparagine 276 carries GPI-anchor amidated asparagine lipidation. Positions 277–302 (SSNIASINKFVVLISATLVLSFAIFI) are cleaved as a propeptide — removed in mature form.

It is found in the cell membrane. Functionally, may play a role in the merozoite attachment to the erythrocyte. This chain is Merozoite surface protein 2, found in Plasmodium falciparum (isolate tak 9).